A 505-amino-acid polypeptide reads, in one-letter code: uncharacterized protein (505 aa).

Helical transmembrane passes span 9-29 (ANLT…PFIV), 49-69 (YFSV…SVAA), 86-106 (AASV…AFFI), 122-142 (LSIL…GFGA), 156-176 (IQAV…ACFA), 181-201 (QIQL…FYFF), 235-255 (IGVL…LGAS), 261-281 (AAII…ASLF), 310-330 (LLLA…LTIW), 341-361 (LLFI…LFYI), 371-391 (PAIV…TLSG), 395-415 (LGLY…NAIF), 435-455 (IIGP…IQFI), and 464-484 (LIAT…MLVC).

The protein resides in the cell membrane. May be involved in the production of the exopolysaccharide (EPS) component of the extracellular matrix during biofilm formation. EPS is responsible for the adhesion of chains of cells into bundles. This is an uncharacterized protein from Bacillus subtilis (strain 168).